A 319-amino-acid polypeptide reads, in one-letter code: rRNA adenine N-6-methyltransferase (319 aa).

The disordered stretch occupies residues 1-59 (MARAPRSPHPARSRETSRAHPPYGTRADRAPGRGRDRDRSPDSPGNTSSRDGGRSPDRA). The span at 26–41 (RADRAPGRGRDRDRSP) shows a compositional bias: basic and acidic residues. Residues Asn-66, Leu-68, Gly-93, Glu-114, Asp-141, and Asn-157 each coordinate S-adenosyl-L-methionine.

This sequence belongs to the class I-like SAM-binding methyltransferase superfamily. rRNA adenine N(6)-methyltransferase family.

It catalyses the reaction adenosine(2085) in 23S rRNA + 2 S-adenosyl-L-methionine = N(6)-dimethyladenosine(2085) in 23S rRNA + 2 S-adenosyl-L-homocysteine + 2 H(+). This protein produces a dimethylation of the adenine residue at position 2085 in 23S rRNA, resulting in reduced affinity between ribosomes and macrolide-lincosamide-streptogramin B antibiotics. This is rRNA adenine N-6-methyltransferase (ermSF) from Streptomyces fradiae (Streptomyces roseoflavus).